The chain runs to 516 residues: Na(+)/H(+) antiporter NhaB (516 aa).

The next 12 helical transmembrane spans lie at 23–43, 61–80, 97–117, 120–140, 144–164, 202–222, 238–258, 303–323, 348–368, 391–411, 447–467, and 475–495; these read LALIIFLIVNPLVFAVAPFVA, CYPLLPGGLLAIEALLIGMT, LLLMFMVAGIYFMKQLLLFVF, LLLGIRSKMLLSLAFCLAAAF, FLDALTVVAVVISVAVGFYGI, LMMHAGVGTALGGVMTMVGEP, FFLRMAPVTLPVMVCGLLTCL, ALIGVWLIVALAFHLAEVGLI, TEALPFTALLTVFFSIVAVII, LFYLFNGLLSSISDNVFVGTV, ATPNGQAAFLFLLTSALAPLI, and VWMALPYTIVLTLVGLLCVEF.

Belongs to the NhaB Na(+)/H(+) (TC 2.A.34) antiporter family.

The protein localises to the cell inner membrane. The catalysed reaction is 2 Na(+)(in) + 3 H(+)(out) = 2 Na(+)(out) + 3 H(+)(in). Functionally, na(+)/H(+) antiporter that extrudes sodium in exchange for external protons. In Klebsiella pneumoniae subsp. pneumoniae (strain ATCC 700721 / MGH 78578), this protein is Na(+)/H(+) antiporter NhaB.